The sequence spans 310 residues: Porphobilinogen deaminase (310 aa).

At cysteine 241 the chain carries S-(dipyrrolylmethanemethyl)cysteine.

This sequence belongs to the HMBS family. Monomer. It depends on dipyrromethane as a cofactor.

The enzyme catalyses 4 porphobilinogen + H2O = hydroxymethylbilane + 4 NH4(+). It participates in porphyrin-containing compound metabolism; protoporphyrin-IX biosynthesis; coproporphyrinogen-III from 5-aminolevulinate: step 2/4. In terms of biological role, tetrapolymerization of the monopyrrole PBG into the hydroxymethylbilane pre-uroporphyrinogen in several discrete steps. The sequence is that of Porphobilinogen deaminase from Lysinibacillus sphaericus (strain C3-41).